We begin with the raw amino-acid sequence, 98 residues long: MNQTAILICCLVFLTLSGIQGIPLSRTVRCTCISISNQPVNPRSLEKLEIIPPSQFCPHVEIIATMKKKGEKRCLNPESKAIKNLLKAVSKERSKRSP.

An N-terminal signal peptide occupies residues 1–21 (MNQTAILICCLVFLTLSGIQG). Arginine 26 bears the Citrulline mark. Intrachain disulfides connect cysteine 30-cysteine 57 and cysteine 32-cysteine 74.

Belongs to the intercrine alpha (chemokine CxC) family.

The protein localises to the secreted. Chemotactic for monocytes and T-lymphocytes. Binds to CXCR3. The protein is C-X-C motif chemokine 10 (CXCL10) of Macaca mulatta (Rhesus macaque).